Here is a 176-residue protein sequence, read N- to C-terminus: Protein GrpE (176 aa).

It belongs to the GrpE family. Homodimer.

The protein resides in the cytoplasm. Functionally, participates actively in the response to hyperosmotic and heat shock by preventing the aggregation of stress-denatured proteins, in association with DnaK and GrpE. It is the nucleotide exchange factor for DnaK and may function as a thermosensor. Unfolded proteins bind initially to DnaJ; upon interaction with the DnaJ-bound protein, DnaK hydrolyzes its bound ATP, resulting in the formation of a stable complex. GrpE releases ADP from DnaK; ATP binding to DnaK triggers the release of the substrate protein, thus completing the reaction cycle. Several rounds of ATP-dependent interactions between DnaJ, DnaK and GrpE are required for fully efficient folding. The protein is Protein GrpE of Rickettsia bellii (strain OSU 85-389).